Here is a 339-residue protein sequence, read N- to C-terminus: Ribosomal RNA small subunit methyltransferase C (339 aa).

The protein belongs to the methyltransferase superfamily. RsmC family. In terms of assembly, monomer.

It is found in the cytoplasm. The enzyme catalyses guanosine(1207) in 16S rRNA + S-adenosyl-L-methionine = N(2)-methylguanosine(1207) in 16S rRNA + S-adenosyl-L-homocysteine + H(+). In terms of biological role, specifically methylates the guanine in position 1207 of 16S rRNA in the 30S particle. The polypeptide is Ribosomal RNA small subunit methyltransferase C (Aliivibrio fischeri (strain MJ11) (Vibrio fischeri)).